A 2150-amino-acid polypeptide reads, in one-letter code: Hybrid signal transduction histidine kinase A (2150 aa).

Over residues Met-1–Asn-10 the composition is skewed to basic and acidic residues. Disordered regions lie at residues Met-1–Gln-41, His-68–Ser-149, Asn-184–Arg-267, Lys-286–Gly-323, Thr-339–Ser-359, Asn-415–Arg-505, Ser-520–Gly-546, and Lys-560–Thr-733. Over residues Pro-19 to Thr-32 the composition is skewed to polar residues. A compositionally biased stretch (low complexity) spans His-68–Gln-81. The span at His-82–Ile-104 shows a compositional bias: polar residues. Composition is skewed to low complexity over residues Asn-105–Asn-145 and Asn-184–Ile-244. Positions Pro-289–Val-304 are enriched in polar residues. Composition is skewed to low complexity over residues Asn-305–Ser-318, Gly-344–Ser-359, and Asn-415–Ser-447. The span at Pro-448–Arg-468 shows a compositional bias: polar residues. Composition is skewed to low complexity over residues Asn-469–Ile-485, Ser-520–Asn-545, and Asn-565–Asn-600. The segment covering Ser-614 to Asn-628 has biased composition (polar residues). The segment covering Asn-657–Asn-727 has biased composition (low complexity). Residues Ala-772–Leu-792 traverse the membrane as a helical segment. Residues Ser-838 to Ala-1082 enclose the CHASE domain. A helical transmembrane segment spans residues Pro-1098 to Val-1118. Residues Asn-1139 to Ala-1164 are a coiled coil. Disordered stretches follow at residues Leu-1209–Phe-1228 and Val-1233–Gly-1252. Residues Ser-1235–Glu-1317 form the PAS domain. The 56-residue stretch at Met-1321–Glu-1376 folds into the PAC domain. Positions Thr-1393 to Leu-1620 constitute a Histidine kinase domain. His-1396 carries the post-translational modification Phosphohistidine; by autocatalysis. 3 disordered regions span residues Gly-1874–Phe-1893, His-1933–Ser-1952, and Gln-1962–Val-2017. Composition is skewed to low complexity over residues Asn-1878 to Phe-1893, Asn-1935 to Ser-1952, and Gln-1962 to Leu-2002. Residues Lys-2026–Gly-2146 enclose the Response regulatory domain. 4-aspartylphosphate is present on Asp-2076.

In terms of assembly, interacts with SDF-2, an acbA peptide involved in sporulation.

It is found in the cell membrane. It carries out the reaction ATP + protein L-histidine = ADP + protein N-phospho-L-histidine.. In terms of biological role, acts as a receptor histidine kinase for the cytokinin SDF-2 in a signal transduction pathway that regulates prestalk gene expression and controls terminal differentiation of prespore cells. Binding of SDF-2 to this protein inhibits phosphorelay and induces rapid sporulation. This protein undergoes an ATP-dependent autophosphorylation at a conserved histidine residue in the kinase core, and a phosphoryl group is then transferred to a conserved aspartate residue in the receiver domain. In Dictyostelium discoideum (Social amoeba), this protein is Hybrid signal transduction histidine kinase A (dhkA).